The sequence spans 434 residues: Asparagine--tRNA ligase (434 aa).

Belongs to the class-II aminoacyl-tRNA synthetase family.

The protein resides in the cytoplasm. The catalysed reaction is tRNA(Asn) + L-asparagine + ATP = L-asparaginyl-tRNA(Asn) + AMP + diphosphate + H(+). The polypeptide is Asparagine--tRNA ligase (Pyrococcus abyssi (strain GE5 / Orsay)).